Consider the following 86-residue polypeptide: Progonadoliberin IIB (86 aa).

Positions 1-24 (MVHICRLFVVMGMLMFLSVQFASS) are cleaved as a signal peptide. The residue at position 25 (Q25) is a Pyrrolidone carboxylic acid. Position 34 is a glycine amide (G34).

It belongs to the GnRH family. As to expression, olfactory bulbs, hypothalamus and telencephalon, midbrain and posterior brain areas.

Its subcellular location is the secreted. In terms of biological role, stimulates the secretion of gonadotropins. In Carassius auratus (Goldfish), this protein is Progonadoliberin IIB (gnrh2b).